A 267-amino-acid chain; its full sequence is Mediator of RNA polymerase II transcription subunit 8 (267 aa).

Coiled-coil stretches lie at residues 1–26 (MQRE…KNSL) and 116–160 (DVEE…EERE). The tract at residues 190–267 (GLSNRRPPGQ…KSASMHPYQR (78 aa)) is disordered. A compositionally biased stretch (polar residues) spans 227–245 (PPNQQQQHMAGVSMSQGSQ).

This sequence belongs to the Mediator complex subunit 8 family. In terms of assembly, component of the Mediator complex. May be part of a multisubunit E3 ubiquitin-protein ligase complex.

Its subcellular location is the nucleus. Its pathway is protein modification; protein ubiquitination. In terms of biological role, component of the Mediator complex, a coactivator involved in the regulated transcription of nearly all RNA polymerase II-dependent genes. Mediator functions as a bridge to convey information from gene-specific regulatory proteins to the basal RNA polymerase II transcription machinery. Mediator is recruited to promoters by direct interactions with regulatory proteins and serves as a scaffold for the assembly of a functional preinitiation complex with RNA polymerase II and the general transcription factors. May play a role as a target recruitment subunit in E3 ubiquitin-protein ligase complexes and thus in ubiquitination and subsequent proteasomal degradation of target proteins. The chain is Mediator of RNA polymerase II transcription subunit 8 (med8) from Xenopus tropicalis (Western clawed frog).